Consider the following 534-residue polypeptide: CTP synthase (534 aa).

The segment at 1–266 (MKQKFIFVTG…DELIVARLGL (266 aa)) is amidoligase domain. Ser14 is a binding site for CTP. A UTP-binding site is contributed by Ser14. Residues 15 to 20 (SIGKGL) and Asp72 each bind ATP. 2 residues coordinate Mg(2+): Asp72 and Glu140. Residues 147–149 (DIE), 187–192 (KSKPTQ), and Lys223 each bind CTP. UTP contacts are provided by residues 187 to 192 (KSKPTQ) and Lys223. A Glutamine amidotransferase type-1 domain is found at 291-534 (KIGVVGKYVD…HFVKASLKKK (244 aa)). L-glutamine is bound at residue Gly353. Cys380 functions as the Nucleophile; for glutamine hydrolysis in the catalytic mechanism. L-glutamine contacts are provided by residues 381–384 (FGMQ), Glu404, and Arg464. Catalysis depends on residues His509 and Glu511.

This sequence belongs to the CTP synthase family. In terms of assembly, homotetramer.

It catalyses the reaction UTP + L-glutamine + ATP + H2O = CTP + L-glutamate + ADP + phosphate + 2 H(+). The catalysed reaction is L-glutamine + H2O = L-glutamate + NH4(+). It carries out the reaction UTP + NH4(+) + ATP = CTP + ADP + phosphate + 2 H(+). Its pathway is pyrimidine metabolism; CTP biosynthesis via de novo pathway; CTP from UDP: step 2/2. Allosterically activated by GTP, when glutamine is the substrate; GTP has no effect on the reaction when ammonia is the substrate. The allosteric effector GTP functions by stabilizing the protein conformation that binds the tetrahedral intermediate(s) formed during glutamine hydrolysis. Inhibited by the product CTP, via allosteric rather than competitive inhibition. Catalyzes the ATP-dependent amination of UTP to CTP with either L-glutamine or ammonia as the source of nitrogen. Regulates intracellular CTP levels through interactions with the four ribonucleotide triphosphates. This is CTP synthase from Bdellovibrio bacteriovorus (strain ATCC 15356 / DSM 50701 / NCIMB 9529 / HD100).